The following is a 391-amino-acid chain: Esterase (391 aa).

Residues 1–26 (MEFPETNNNPIITLSFLLCMLSLAYA) form the signal peptide. The Nucleophile role is filled by S41. N-linked (GlcNAc...) asparagine glycans are attached at residues N186, N193, and N313. Active-site residues include D347 and H350.

This sequence belongs to the 'GDSL' lipolytic enzyme family. Post-translationally, the N-terminus is blocked. Glycosylated.

Has lipase and esterase activities. May be involved in plant defense. This chain is Esterase, found in Hevea brasiliensis (Para rubber tree).